The chain runs to 492 residues: Cell division protein FtsA (492 aa).

Disordered regions lie at residues 288-307 (GEETPSQNVQIPTTGSDGHE) and 429-458 (YTRTAHQSSPTPHIHSSPTERNLSDLKAPS). The segment covering 291–303 (TPSQNVQIPTTGS) has biased composition (polar residues). Residues 436 to 447 (SSPTPHIHSSPT) show a composition bias toward low complexity.

Belongs to the FtsA/MreB family. Self-interacts. Interacts with FtsZ.

It localises to the cell inner membrane. Cell division protein that is involved in the assembly of the Z ring. May serve as a membrane anchor for the Z ring. The polypeptide is Cell division protein FtsA (Helicobacter pylori (strain ATCC 700392 / 26695) (Campylobacter pylori)).